We begin with the raw amino-acid sequence, 877 residues long: Phosphoenolpyruvate carboxylase (877 aa).

Residues H138 and K543 contribute to the active site.

It belongs to the PEPCase type 1 family. The cofactor is Mg(2+).

It catalyses the reaction oxaloacetate + phosphate = phosphoenolpyruvate + hydrogencarbonate. Forms oxaloacetate, a four-carbon dicarboxylic acid source for the tricarboxylic acid cycle. This is Phosphoenolpyruvate carboxylase from Aeromonas salmonicida (strain A449).